Consider the following 610-residue polypeptide: Solute carrier family 23 member 3 (610 aa).

Residues 1-16 (MSRSPLNPSQLRSVGS) show a composition bias toward polar residues. Residues 1-32 (MSRSPLNPSQLRSVGSQDALAPLPPPAPQNPS) form a disordered region. The Cytoplasmic portion of the chain corresponds to 1-49 (MSRSPLNPSQLRSVGSQDALAPLPPPAPQNPSTHSWDPLCGSLPWGLSC). The chain crosses the membrane as a helical span at residues 50-70 (LLALQHVLVMASLLCVSHLLL). Residues 71 to 85 (LCSLSPGGLSYSPSQ) lie on the Extracellular side of the membrane. Residues 86 to 106 (LLASSFFSCGMSTILQTWMGS) form a helical membrane-spanning segment. Residues 107 to 164 (RLPLVQAPSLEFLIPALVLTSQKLPRAIQTPGNSSLMLHLCRGPSCHGLGHWNTSLQE) are Cytoplasmic-facing. Residues 165–185 (VSGAVVVSGLLQGMMGLLGSP) traverse the membrane as a helical segment. The Extracellular portion of the chain corresponds to 186–187 (GH). The helical transmembrane segment at 188-208 (VFPHCGPLVLAPSLVVAGLSA) threads the bilayer. The Cytoplasmic segment spans residues 209–211 (HRE). Residues 212–232 (VAQFCFTHWGLALLVILLMVV) traverse the membrane as a helical segment. The Extracellular portion of the chain corresponds to 233–266 (CSQHLGSCQFHVCPWRRASTSSTHTPLPVFRLLS). A helical transmembrane segment spans residues 267 to 287 (VLIPVACVWIVSAFVGFSVIP). Residues 288–316 (QELSAPTKAPWIWLPHPGEWNWPLLTPRA) are Cytoplasmic-facing. Residues 317 to 337 (LAAGISMALAASTSSLGCYAL) form a helical membrane-spanning segment. The Extracellular portion of the chain corresponds to 338–355 (CGRLLHLPPPPPHACSRG). A helical membrane pass occupies residues 356-376 (LSLEGLGSVLAGLLGSPMGTA). Residues 377–394 (SSFPNVGKVGLIQAGSQQ) lie on the Cytoplasmic side of the membrane. Residues 395–414 (VAHLVGLLCVGLGLSPRLAQ) traverse the membrane as a helical segment. Residues 415–423 (LLTTIPLPV) lie on the Extracellular side of the membrane. Residues 424–446 (VGGVLGVTQAVVLSAGFSSFYLA) traverse the membrane as a helical segment. At 447-452 (DIDSGR) the chain is on the cytoplasmic side. A helical transmembrane segment spans residues 453–472 (NIFIVGFSIFMALLLPRWFR). Residues 473 to 486 (EAPVLFSTGWSPLD) are Extracellular-facing. The chain crosses the membrane as a helical span at residues 487-507 (VLLHSLLTQPIFLAGLSGFLL). At 508 to 610 (ENTIPGTQLE…SSREGFRSQK (103 aa)) the chain is on the cytoplasmic side. A disordered region spans residues 571–610 (PEDPGDEEGGSSEPEEMADLLPGSGEPCPESSREGFRSQK). Residues 573-588 (DPGDEEGGSSEPEEMA) show a composition bias toward acidic residues. A compositionally biased stretch (basic and acidic residues) spans 601 to 610 (SSREGFRSQK).

It belongs to the nucleobase:cation symporter-2 (NCS2) (TC 2.A.40) family.

Its subcellular location is the membrane. It carries out the reaction hypoxanthine(out) + Na(+)(out) = hypoxanthine(in) + Na(+)(in). Its function is as follows. Acts as a sodium-dependent hypoxanthine transporter. May show xanthine-hypoxanthine exchange activity. The sequence is that of Solute carrier family 23 member 3 (SLC23A3) from Homo sapiens (Human).